The chain runs to 389 residues: Lipid-A-disaccharide synthase (389 aa).

The protein belongs to the LpxB family.

It catalyses the reaction a lipid X + a UDP-2-N,3-O-bis[(3R)-3-hydroxyacyl]-alpha-D-glucosamine = a lipid A disaccharide + UDP + H(+). The protein operates within bacterial outer membrane biogenesis; LPS lipid A biosynthesis. Functionally, condensation of UDP-2,3-diacylglucosamine and 2,3-diacylglucosamine-1-phosphate to form lipid A disaccharide, a precursor of lipid A, a phosphorylated glycolipid that anchors the lipopolysaccharide to the outer membrane of the cell. In Burkholderia ambifaria (strain ATCC BAA-244 / DSM 16087 / CCUG 44356 / LMG 19182 / AMMD) (Burkholderia cepacia (strain AMMD)), this protein is Lipid-A-disaccharide synthase.